The chain runs to 370 residues: Holliday junction branch migration complex subunit RuvB (370 aa).

The interval 1–53 is disordered; it reads MAILSSQKQPLEPEPSKNPQSVQQPGLPPSTPEQGLLTAEVSPEERLSRTDDI. The large ATPase domain (RuvB-L) stretch occupies residues 13–214; sequence PEPSKNPQSV…FGLIQRLRFY (202 aa). Over residues 43 to 53 the composition is skewed to basic and acidic residues; the sequence is PEERLSRTDDI. ATP contacts are provided by residues isoleucine 53, arginine 54, glycine 95, lysine 98, threonine 99, threonine 100, 161–163, arginine 204, tyrosine 214, and arginine 251; that span reads EDF. Threonine 99 contributes to the Mg(2+) binding site. The tract at residues 215–285 is small ATPAse domain (RuvB-S); the sequence is EPEELSQIIL…IASEALQLFN (71 aa). The tract at residues 288–370 is head domain (RuvB-H); it reads PCGLDWTDRR…TPPDGQLSLL (83 aa). The DNA site is built by arginine 343 and arginine 348.

It belongs to the RuvB family. Homohexamer. Forms an RuvA(8)-RuvB(12)-Holliday junction (HJ) complex. HJ DNA is sandwiched between 2 RuvA tetramers; dsDNA enters through RuvA and exits via RuvB. An RuvB hexamer assembles on each DNA strand where it exits the tetramer. Each RuvB hexamer is contacted by two RuvA subunits (via domain III) on 2 adjacent RuvB subunits; this complex drives branch migration. In the full resolvosome a probable DNA-RuvA(4)-RuvB(12)-RuvC(2) complex forms which resolves the HJ.

The protein resides in the cytoplasm. It catalyses the reaction ATP + H2O = ADP + phosphate + H(+). Functionally, the RuvA-RuvB-RuvC complex processes Holliday junction (HJ) DNA during genetic recombination and DNA repair, while the RuvA-RuvB complex plays an important role in the rescue of blocked DNA replication forks via replication fork reversal (RFR). RuvA specifically binds to HJ cruciform DNA, conferring on it an open structure. The RuvB hexamer acts as an ATP-dependent pump, pulling dsDNA into and through the RuvAB complex. RuvB forms 2 homohexamers on either side of HJ DNA bound by 1 or 2 RuvA tetramers; 4 subunits per hexamer contact DNA at a time. Coordinated motions by a converter formed by DNA-disengaged RuvB subunits stimulates ATP hydrolysis and nucleotide exchange. Immobilization of the converter enables RuvB to convert the ATP-contained energy into a lever motion, pulling 2 nucleotides of DNA out of the RuvA tetramer per ATP hydrolyzed, thus driving DNA branch migration. The RuvB motors rotate together with the DNA substrate, which together with the progressing nucleotide cycle form the mechanistic basis for DNA recombination by continuous HJ branch migration. Branch migration allows RuvC to scan DNA until it finds its consensus sequence, where it cleaves and resolves cruciform DNA. This is Holliday junction branch migration complex subunit RuvB from Cyanothece sp. (strain PCC 7425 / ATCC 29141).